Consider the following 503-residue polypeptide: Maturase K (503 aa).

The protein belongs to the intron maturase 2 family. MatK subfamily.

The protein localises to the plastid. It localises to the chloroplast. In terms of biological role, usually encoded in the trnK tRNA gene intron. Probably assists in splicing its own and other chloroplast group II introns. This Panax ginseng (Korean ginseng) protein is Maturase K.